The primary structure comprises 311 residues: Acetaldehyde dehydrogenase (311 aa).

The active-site Acyl-thioester intermediate is the cysteine 131. Residues 162–170 and asparagine 273 each bind NAD(+); that span reads SVGPGTRKN.

The protein belongs to the acetaldehyde dehydrogenase family.

It carries out the reaction acetaldehyde + NAD(+) + CoA = acetyl-CoA + NADH + H(+). The sequence is that of Acetaldehyde dehydrogenase from Ralstonia pickettii (strain 12J).